The following is a 219-amino-acid chain: PKHD-type hydroxylase SYNPCC7002_A2658 (219 aa).

One can recognise a Fe2OG dioxygenase domain in the interval 78–172 (TVHTLLFSRY…RLVAVGWVQS (95 aa)). The Fe cation site is built by H96, D98, and H153. Position 163 (R163) interacts with 2-oxoglutarate.

Fe(2+) is required as a cofactor. L-ascorbate serves as cofactor.

The chain is PKHD-type hydroxylase SYNPCC7002_A2658 from Picosynechococcus sp. (strain ATCC 27264 / PCC 7002 / PR-6) (Agmenellum quadruplicatum).